The primary structure comprises 63 residues: Large ribosomal subunit protein uL29 (63 aa).

The protein belongs to the universal ribosomal protein uL29 family.

The chain is Large ribosomal subunit protein uL29 from Pseudomonas aeruginosa (strain UCBPP-PA14).